A 792-amino-acid polypeptide reads, in one-letter code: Homeobox protein HAZ1 (792 aa).

The disordered stretch occupies residues 1–154 (MDKTTTSDLV…RPPKGGTPKD (154 aa)). Over residues 15-36 (NIGSNAGSAQEPLTTNGKTSGV) the composition is skewed to polar residues. Over residues 38–49 (NRYKQTVKRGRK) the composition is skewed to basic residues. The segment covering 51–67 (SQISPSKTYPLRSSHSN) has biased composition (polar residues). Residues 95–104 (VAKKRKRSKP) are compositionally biased toward basic residues. The segment covering 116-127 (TSEKKNKAHNEL) has biased composition (basic and acidic residues). The PHD-type zinc finger occupies 244–301 (DIFCAACGSKDVTLKNDIILCDGICDRGFHQYCLNPPLLAEDIPQGDEGWLCPACDCK). 2 disordered regions span residues 338 to 495 (QIDA…NSNL) and 529 to 599 (YGKA…SDQQ). Acidic residues predominate over residues 345–354 (PSDDSADNDY). A compositionally biased stretch (basic and acidic residues) spans 362-371 (HKVDEEKSSG). Acidic residues-rich tracts occupy residues 373 to 389 (DGGE…EDSE) and 433 to 453 (DESN…DDFC). A DNA-binding region (homeobox) is located at residues 610 to 669 (STAKNRHFGPAINQKLKAHFKEDPYPSRATKENLAQELGLTFNQVTKWFSSTRHYARVAA). Disordered stretches follow at residues 677–697 (ENHT…QLRG) and 711–792 (SEER…KTGR). Polar residues-rich tracts occupy residues 716–737 (GQSN…QSVA) and 746–760 (NQGN…TPNA). The segment covering 774 to 792 (DEARRKAVQRELRKMKTGR) has biased composition (basic and acidic residues).

Belongs to the PHD-associated homeobox family. In terms of tissue distribution, expressed in roots, leaves, stems, panicle and seeds.

The protein resides in the nucleus. Functionally, transcriptional repressor involved in the regulation of gibberrelin (GA) signaling. Binds to the 5'-GATC-3' motif of HD16/EL1 promoter. Functions as a positive regulator of GA signaling by suppressing the expression of HD16/EL1, a negative regulator of GA signaling. This chain is Homeobox protein HAZ1, found in Oryza sativa subsp. japonica (Rice).